Reading from the N-terminus, the 260-residue chain is Transcription factor BEE 1 (260 aa).

The tract at residues 118–139 (ETGSLRRGKRLKKKKEEEDEKE) is disordered. The region spanning 151 to 201 (QATDSHSLAERVRRGKINERLRCLQDMVPGCYKAMGMATMLDEIINYVQSL) is the bHLH domain.

It localises to the nucleus. Its function is as follows. Positive regulator of brassinosteroid signaling. In Arabidopsis thaliana (Mouse-ear cress), this protein is Transcription factor BEE 1 (BEE1).